The chain runs to 336 residues: Large ribosomal subunit protein mL39 (336 aa).

The TGS domain maps to 60–126 (EKIEVKHVGK…TKSCEIKFLT (67 aa)). Lys-123 bears the N6-acetyllysine mark.

It belongs to the mitochondrion-specific ribosomal protein mL39 family. Component of the mitochondrial ribosome large subunit (39S) which comprises a 16S rRNA and about 50 distinct proteins.

The protein localises to the mitochondrion. This is Large ribosomal subunit protein mL39 (Mrpl39) from Mus musculus (Mouse).